Here is a 341-residue protein sequence, read N- to C-terminus: Platelet-activating factor receptor (341 aa).

The Extracellular portion of the chain corresponds to 1–16 (MEHNGSFRVDSEFRYT). A glycan (N-linked (GlcNAc...) asparagine) is linked at Asn4. A helical transmembrane segment spans residues 17 to 38 (LFPIVYSVIFILGVVANGYVLW). Topologically, residues 39–54 (VFANLYPSKKLNEIKI) are cytoplasmic. The chain crosses the membrane as a helical span at residues 55–74 (FMVNLTMADLLFLITLPLWI). At 75-91 (VYYYNEGDWILPNFLCN) the chain is on the extracellular side. An intrachain disulfide couples Cys90 to Cys173. Residues 92–113 (VAGCLFFINTYCSVAFLGVITY) traverse the membrane as a helical segment. The Cytoplasmic segment spans residues 114–133 (NRYQAVAYPIKTAQATTRKR). A helical transmembrane segment spans residues 134–155 (GISLSLIIWVSIVATASYFLAT). At 156-184 (DSTNLVPNKDGSGNITRCFEHYEPYSVPI) the chain is on the extracellular side. Asn169 carries N-linked (GlcNAc...) asparagine glycosylation. Residues 185–205 (LVVHVFIAFCFFLVFFLIFYC) traverse the membrane as a helical segment. Over 206 to 233 (NLVIIHTLLTQPMRQQRKAGVKRRALWM) the chain is Cytoplasmic. A helical membrane pass occupies residues 234–254 (VCTVLAVFIICFVPHHVVQLP). At 255 to 275 (WTLAELGYQTNFHQAINDAHQ) the chain is on the extracellular side. Residues 276–295 (ITLCLLSTNCVLDPVIYCFL) traverse the membrane as a helical segment. Over 296–341 (TKKFRKHLSEKFYSMRSSRKCSRATSDTCTEVIVPANQTPIVSLKN) the chain is Cytoplasmic.

This sequence belongs to the G-protein coupled receptor 1 family. In terms of assembly, interacts with ARRB1. In terms of tissue distribution, found in a range of organs. Expressed most strongly in spleen, followed by skeletal muscle, lung and small intestine. Expressed at moderate levels in the heart. Expressed at relatively low levels in the brain, liver and kidney.

Its subcellular location is the cell membrane. Its function is as follows. Receptor for platelet activating factor, a chemotactic phospholipid mediator that possesses potent inflammatory, smooth-muscle contractile and hypotensive activity. Seems to mediate its action via a G protein that activates a phosphatidylinositol-calcium second messenger system. This is Platelet-activating factor receptor (Ptafr) from Mus musculus (Mouse).